The following is a 157-amino-acid chain: Ribonuclease H (157 aa).

Positions Asn-2 to Ala-145 constitute an RNase H type-1 domain. Mg(2+) contacts are provided by Asp-11, Glu-50, Asp-74, and Asp-137.

The protein belongs to the RNase H family. In terms of assembly, monomer. Mg(2+) is required as a cofactor.

The protein localises to the cytoplasm. It carries out the reaction Endonucleolytic cleavage to 5'-phosphomonoester.. In terms of biological role, endonuclease that specifically degrades the RNA of RNA-DNA hybrids. This chain is Ribonuclease H, found in Cyanothece sp. (strain PCC 7425 / ATCC 29141).